The primary structure comprises 549 residues: Oxygen-dependent choline dehydrogenase (549 aa).

Residue 4 to 33 participates in FAD binding; it reads DYIIIGSGSAGSALAHRLSEDSRNSVIVLE. Histidine 465 serves as the catalytic Proton acceptor.

This sequence belongs to the GMC oxidoreductase family. It depends on FAD as a cofactor.

It carries out the reaction choline + A = betaine aldehyde + AH2. The enzyme catalyses betaine aldehyde + NAD(+) + H2O = glycine betaine + NADH + 2 H(+). The protein operates within amine and polyamine biosynthesis; betaine biosynthesis via choline pathway; betaine aldehyde from choline (cytochrome c reductase route): step 1/1. In terms of biological role, involved in the biosynthesis of the osmoprotectant glycine betaine. Catalyzes the oxidation of choline to betaine aldehyde and betaine aldehyde to glycine betaine at the same rate. The chain is Oxygen-dependent choline dehydrogenase from Sinorhizobium fredii (strain NBRC 101917 / NGR234).